The chain runs to 427 residues: Enolase 2 (427 aa).

Glutamine 163 provides a ligand contact to (2R)-2-phosphoglycerate. The active-site Proton donor is glutamate 205. Aspartate 242, glutamate 285, and aspartate 312 together coordinate Mg(2+). Residues lysine 337, arginine 366, serine 367, and lysine 388 each coordinate (2R)-2-phosphoglycerate. The active-site Proton acceptor is lysine 337.

Belongs to the enolase family. Component of the RNA degradosome, a multiprotein complex involved in RNA processing and mRNA degradation. Requires Mg(2+) as cofactor.

It is found in the cytoplasm. The protein localises to the secreted. It localises to the cell surface. It catalyses the reaction (2R)-2-phosphoglycerate = phosphoenolpyruvate + H2O. Its pathway is carbohydrate degradation; glycolysis; pyruvate from D-glyceraldehyde 3-phosphate: step 4/5. Functionally, catalyzes the reversible conversion of 2-phosphoglycerate (2-PG) into phosphoenolpyruvate (PEP). It is essential for the degradation of carbohydrates via glycolysis. The chain is Enolase 2 from Methylococcus capsulatus (strain ATCC 33009 / NCIMB 11132 / Bath).